The primary structure comprises 354 residues: Serine/threonine-protein kinase-transforming protein mos (354 aa).

Positions 74–350 (VCLMHRLGSG…LLQRDLKAFR (277 aa)) constitute a Protein kinase domain. ATP-binding positions include 80 to 88 (LGSGGFGSV) and lysine 101. The active-site Proton acceptor is aspartate 209.

It belongs to the protein kinase superfamily. Ser/Thr protein kinase family.

The enzyme catalyses L-seryl-[protein] + ATP = O-phospho-L-seryl-[protein] + ADP + H(+). It catalyses the reaction L-threonyl-[protein] + ATP = O-phospho-L-threonyl-[protein] + ADP + H(+). The chain is Serine/threonine-protein kinase-transforming protein mos (V-MOS) from Moloney murine sarcoma virus (strain ts110) (MoMSV).